The following is a 598-amino-acid chain: Ecto-NOX disulfide-thiol exchanger 2 (598 aa).

The region spanning 99–178 is the RRM domain; that stretch reads KTVFVGGLPE…GRLHVDFAQA (80 aa). Coiled-coil stretches lie at residues 264-299 and 352-476; these read IQSANSHVRRLVNEKATHEKEMEEAKEKFKQALSGI and RREE…KQEN.

The protein belongs to the ENOX family. Cu cation is required as a cofactor. In terms of processing, glycosylated.

It is found in the cell membrane. The protein localises to the secreted. The protein resides in the extracellular space. Inhibited by the antitumor sulfonylurea LY181984, the vabilloid capsaicin, and retinoids. Functionally, may be involved in cell growth. Probably acts as a terminal oxidase of plasma electron transport from cytosolic NAD(P)H via hydroquinones to acceptors at the cell surface. Hydroquinone oxidase activity alternates with a protein disulfide-thiol interchange/oxidoreductase activity which may control physical membrane displacements associated with vesicle budding or cell enlargement. The activities oscillate with a period length of 22 minutes and play a role in control of the ultradian cellular biological clock. This chain is Ecto-NOX disulfide-thiol exchanger 2 (Enox2), found in Mus musculus (Mouse).